Reading from the N-terminus, the 128-residue chain is NADH-quinone oxidoreductase subunit A (128 aa).

3 consecutive transmembrane segments (helical) span residues 9–29 (FPIA…LALA), 68–88 (LLFI…VLLL), and 96–116 (LGWA…AGLV).

The protein belongs to the complex I subunit 3 family. NDH-1 is composed of 14 different subunits. Subunits NuoA, H, J, K, L, M, N constitute the membrane sector of the complex.

Its subcellular location is the cell inner membrane. The catalysed reaction is a quinone + NADH + 5 H(+)(in) = a quinol + NAD(+) + 4 H(+)(out). Functionally, NDH-1 shuttles electrons from NADH, via FMN and iron-sulfur (Fe-S) centers, to quinones in the respiratory chain. The immediate electron acceptor for the enzyme in this species is believed to be ubiquinone. Couples the redox reaction to proton translocation (for every two electrons transferred, four hydrogen ions are translocated across the cytoplasmic membrane), and thus conserves the redox energy in a proton gradient. This is NADH-quinone oxidoreductase subunit A from Anaeromyxobacter sp. (strain Fw109-5).